Here is a 665-residue protein sequence, read N- to C-terminus: Succinate dehydrogenase [ubiquinone] flavoprotein subunit A, mitochondrial (665 aa).

The N-terminal 45 residues, 1-45, are a transit peptide targeting the mitochondrion; that stretch reads MALLKVAPSRLLSRALQLASRVQNCTPTVTTARRNFHFTVYGRKD. 5 residues coordinate FAD: Ala-72, Ala-75, Thr-94, Lys-95, and Ser-101. Tele-8alpha-FAD histidine is present on His-102. FAD is bound by residues Thr-103, Gly-108, Ala-224, and Asp-278. 3 residues coordinate oxaloacetate: His-299, Arg-343, and His-410. Residue Arg-343 is the Proton acceptor of the active site. An FAD-binding site is contributed by Glu-443. Oxaloacetate contacts are provided by Arg-454 and Ala-457. FAD-binding residues include Ser-459 and Leu-460.

The protein belongs to the FAD-dependent oxidoreductase 2 family. FRD/SDH subfamily. As to quaternary structure, component of complex II composed of four subunits: a flavoprotein (FP), an iron-sulfur protein (IP), and a cytochrome b composed of a large and a small subunit. FAD serves as cofactor.

The protein resides in the mitochondrion inner membrane. It carries out the reaction a ubiquinone + succinate = a ubiquinol + fumarate. The catalysed reaction is (R)-malate + a quinone = enol-oxaloacetate + a quinol. The enzyme catalyses (S)-malate + a quinone = enol-oxaloacetate + a quinol. It participates in carbohydrate metabolism; tricarboxylic acid cycle; fumarate from succinate (eukaryal route): step 1/1. Enol-oxaloacetate inhibits the succinate dehydrogenase activity. Functionally, flavoprotein (FP) subunit of succinate dehydrogenase (SDH) that is involved in complex II of the mitochondrial electron transport chain and is responsible for transferring electrons from succinate to ubiquinone (coenzyme Q). SDH also oxidizes malate to the non-canonical enol form of oxaloacetate, enol-oxaloacetate. Enol-oxaloacetate, which is a potent inhibitor of the succinate dehydrogenase activity, is further isomerized into keto-oxaloacetate. The polypeptide is Succinate dehydrogenase [ubiquinone] flavoprotein subunit A, mitochondrial (sdha-a) (Xenopus laevis (African clawed frog)).